Here is a 124-residue protein sequence, read N- to C-terminus: Small ribosomal subunit protein uS12 (124 aa).

D89 carries the 3-methylthioaspartic acid modification.

The protein belongs to the universal ribosomal protein uS12 family. As to quaternary structure, part of the 30S ribosomal subunit. Contacts proteins S8 and S17. May interact with IF1 in the 30S initiation complex.

Functionally, with S4 and S5 plays an important role in translational accuracy. Its function is as follows. Interacts with and stabilizes bases of the 16S rRNA that are involved in tRNA selection in the A site and with the mRNA backbone. Located at the interface of the 30S and 50S subunits, it traverses the body of the 30S subunit contacting proteins on the other side and probably holding the rRNA structure together. The combined cluster of proteins S8, S12 and S17 appears to hold together the shoulder and platform of the 30S subunit. The protein is Small ribosomal subunit protein uS12 of Acinetobacter baylyi (strain ATCC 33305 / BD413 / ADP1).